A 132-amino-acid polypeptide reads, in one-letter code: MSRQDVQRLLEEYQVINELLATLQAQHTTVSELLEELTTALDGVRLLKTEGGERLVHIGAGLFVLGTFNAREVLTPLGAGYHAFLDLENAERILKERIDEYSKVKTSLEENIEKLIERAAQIRQVLERLGIK.

This sequence belongs to the prefoldin subunit alpha family. As to quaternary structure, heterohexamer of two alpha and four beta subunits.

The protein resides in the cytoplasm. In terms of biological role, molecular chaperone capable of stabilizing a range of proteins. Seems to fulfill an ATP-independent, HSP70-like function in archaeal de novo protein folding. In Pyrobaculum islandicum (strain DSM 4184 / JCM 9189 / GEO3), this protein is Prefoldin subunit alpha.